The primary structure comprises 489 residues: Betaine aldehyde dehydrogenase (489 aa).

2 residues coordinate K(+): Thr-26 and Asp-93. 150–152 (GAW) lines the NAD(+) pocket. The active-site Charge relay system is the Lys-162. Residue 176-179 (KPSE) participates in NAD(+) binding. Residue Val-180 coordinates K(+). 229–232 (GVET) contributes to the NAD(+) binding site. Leu-245 contacts K(+). Glu-251 (proton acceptor) is an active-site residue. Residues Gly-253, Cys-285, and Glu-386 each contribute to the NAD(+) site. Cys-285 serves as the catalytic Nucleophile. The residue at position 285 (Cys-285) is a Cysteine sulfenic acid (-SOH). The K(+) site is built by Lys-456 and Gly-459. Glu-463 (charge relay system) is an active-site residue.

This sequence belongs to the aldehyde dehydrogenase family. Dimer of dimers. It depends on K(+) as a cofactor.

It carries out the reaction betaine aldehyde + NAD(+) + H2O = glycine betaine + NADH + 2 H(+). Its pathway is amine and polyamine biosynthesis; betaine biosynthesis via choline pathway; betaine from betaine aldehyde: step 1/1. Involved in the biosynthesis of the osmoprotectant glycine betaine. Catalyzes the irreversible oxidation of betaine aldehyde to the corresponding acid. The polypeptide is Betaine aldehyde dehydrogenase (Burkholderia ambifaria (strain ATCC BAA-244 / DSM 16087 / CCUG 44356 / LMG 19182 / AMMD) (Burkholderia cepacia (strain AMMD))).